A 472-amino-acid chain; its full sequence is RNA pseudouridine synthase 6, chloroplastic (472 aa).

Residues 1–66 constitute a chloroplast transit peptide; the sequence is MASPALTGGY…TDSQNQTTLS (66 aa). One can recognise an S4 RNA-binding domain in the interval 101 to 208; it reads VLVSEFISKQ…SPRCYEIDWK (108 aa). Asp-261 is a catalytic residue.

It belongs to the pseudouridine synthase RluA family.

The protein resides in the plastid. It localises to the chloroplast. The enzyme catalyses a uridine in RNA = a pseudouridine in RNA. The chain is RNA pseudouridine synthase 6, chloroplastic from Arabidopsis thaliana (Mouse-ear cress).